The following is a 111-amino-acid chain: High mobility group protein Z (111 aa).

The HMG box DNA-binding region spans 6–72 (PKRPLSAYML…EYNKAVKEYE (67 aa)). At Ser11 the chain carries Phosphoserine. A disordered region spans residues 72–111 (EANGGTDSGAPKKRKKAAAKPAKKAKKKESSEEEEEDESE). A compositionally biased stretch (basic residues) spans 82-98 (PKKRKKAAAKPAKKAKK). The span at 102-111 (SEEEEEDESE) shows a compositional bias: acidic residues.

The protein belongs to the HMGB family.

It localises to the nucleus. Its subcellular location is the chromosome. This Drosophila melanogaster (Fruit fly) protein is High mobility group protein Z (HmgZ).